The following is an 87-amino-acid chain: Large ribosomal subunit protein bL31B (87 aa).

It belongs to the bacterial ribosomal protein bL31 family. Type B subfamily. In terms of assembly, part of the 50S ribosomal subunit.

In Halorhodospira halophila (strain DSM 244 / SL1) (Ectothiorhodospira halophila (strain DSM 244 / SL1)), this protein is Large ribosomal subunit protein bL31B.